A 293-amino-acid chain; its full sequence is N-acetylneuraminate lyase (293 aa).

2 residues coordinate aceneuramate: Ser-48 and Ser-49. Tyr-137 acts as the Proton donor in catalysis. Residue Lys-165 is the Schiff-base intermediate with substrate of the active site. Residues Thr-167, Gly-189, Asp-191, Glu-192, and Ser-208 each contribute to the aceneuramate site.

It belongs to the DapA family. NanA subfamily. As to quaternary structure, homotetramer.

The protein resides in the cytoplasm. The enzyme catalyses aceneuramate = aldehydo-N-acetyl-D-mannosamine + pyruvate. Its pathway is amino-sugar metabolism; N-acetylneuraminate degradation; D-fructose 6-phosphate from N-acetylneuraminate: step 1/5. Catalyzes the reversible aldol cleavage of N-acetylneuraminic acid (sialic acid; Neu5Ac) to form pyruvate and N-acetylmannosamine (ManNAc) via a Schiff base intermediate. The sequence is that of N-acetylneuraminate lyase from Staphylococcus aureus (strain Mu3 / ATCC 700698).